Here is a 122-residue protein sequence, read N- to C-terminus: Large ribosomal subunit protein uL14c (122 aa).

Belongs to the universal ribosomal protein uL14 family. As to quaternary structure, part of the 50S ribosomal subunit.

It localises to the plastid. Functionally, binds to 23S rRNA. In Helicosporidium sp. subsp. Simulium jonesii (Green alga), this protein is Large ribosomal subunit protein uL14c (rpl14).